The primary structure comprises 115 residues: U3-lycotoxin-Ls1k (115 aa).

The first 20 residues, 1-20, serve as a signal peptide directing secretion; that stretch reads MKSVLLFGVLLVTLFSYSSA. The propeptide occupies 21–44; that stretch reads EMLDDFDQADEDELLSLIEKEEAR. 4 cysteine pairs are disulfide-bonded: Cys48–Cys63, Cys55–Cys72, Cys62–Cys87, and Cys74–Cys85.

This sequence belongs to the neurotoxin 19 (CSTX) family. 01 subfamily. Expressed by the venom gland.

It is found in the secreted. The polypeptide is U3-lycotoxin-Ls1k (Lycosa singoriensis (Wolf spider)).